Consider the following 481-residue polypeptide: Vanillin dehydrogenase (481 aa).

Residue 228–233 participates in NAD(+) binding; that stretch reads GSTHVG. Catalysis depends on residues Glu-250 and Cys-284.

The protein belongs to the aldehyde dehydrogenase family.

The enzyme catalyses vanillin + NAD(+) + H2O = vanillate + NADH + 2 H(+). Catalyzes the NAD-dependent oxidation of vanillin to vanillic acid. This is Vanillin dehydrogenase (vdh) from Pseudomonas sp. (strain HR199 / DSM 7063).